We begin with the raw amino-acid sequence, 239 residues long: 3-dehydroquinate dehydratase (239 aa).

Residues 35 to 37 (ELR) and Arg70 each bind 3-dehydroquinate. Residue His133 is the Proton donor/acceptor of the active site. Lys160 acts as the Schiff-base intermediate with substrate in catalysis. 3-dehydroquinate-binding residues include Arg202 and Gln225.

It belongs to the type-I 3-dehydroquinase family. As to quaternary structure, homodimer.

It carries out the reaction 3-dehydroquinate = 3-dehydroshikimate + H2O. Its pathway is metabolic intermediate biosynthesis; chorismate biosynthesis; chorismate from D-erythrose 4-phosphate and phosphoenolpyruvate: step 3/7. Involved in the third step of the chorismate pathway, which leads to the biosynthesis of aromatic amino acids. Catalyzes the cis-dehydration of 3-dehydroquinate (DHQ) and introduces the first double bond of the aromatic ring to yield 3-dehydroshikimate. The sequence is that of 3-dehydroquinate dehydratase from Staphylococcus saprophyticus subsp. saprophyticus (strain ATCC 15305 / DSM 20229 / NCIMB 8711 / NCTC 7292 / S-41).